Consider the following 465-residue polypeptide: ATP-dependent RNA helicase ddx19 (465 aa).

Residues 1–20 (MSEKETNTTSTENKEKEKQE) are compositionally biased toward basic and acidic residues. Residues 1 to 45 (MSEKETNTTSTENKEKEKQEQTNTNSTTESTNNQVDEEYERPGRS) form a disordered region. Residues 21–34 (QTNTNSTTESTNNQ) show a composition bias toward low complexity. The Q motif signature appears at 70-98 (KTFEELGLKPELLKGVYAMGYNKPSKIQE). The Helicase ATP-binding domain occupies 102–268 (PIIIQSPNNL…KKIVQDPYTS (167 aa)). 115-122 (SQSGTGKT) lines the ATP pocket. A DEAD box motif is present at residues 215–218 (DEAD). Positions 297 to 449 (ILSDIYGFIS…ELKSSEIESL (153 aa)) constitute a Helicase C-terminal domain.

Belongs to the DEAD box helicase family. DDX19/DBP5 subfamily.

The enzyme catalyses ATP + H2O = ADP + phosphate + H(+). ATP-binding RNA helicase required for normal differentiation and development. The sequence is that of ATP-dependent RNA helicase ddx19 (helC) from Dictyostelium discoideum (Social amoeba).